We begin with the raw amino-acid sequence, 371 residues long: S-adenosylmethionine:tRNA ribosyltransferase-isomerase (371 aa).

Belongs to the QueA family. In terms of assembly, monomer.

The protein resides in the cytoplasm. It catalyses the reaction 7-aminomethyl-7-carbaguanosine(34) in tRNA + S-adenosyl-L-methionine = epoxyqueuosine(34) in tRNA + adenine + L-methionine + 2 H(+). The protein operates within tRNA modification; tRNA-queuosine biosynthesis. Functionally, transfers and isomerizes the ribose moiety from AdoMet to the 7-aminomethyl group of 7-deazaguanine (preQ1-tRNA) to give epoxyqueuosine (oQ-tRNA). In Nitratidesulfovibrio vulgaris (strain ATCC 29579 / DSM 644 / CCUG 34227 / NCIMB 8303 / VKM B-1760 / Hildenborough) (Desulfovibrio vulgaris), this protein is S-adenosylmethionine:tRNA ribosyltransferase-isomerase.